Reading from the N-terminus, the 175-residue chain is uncharacterized protein (175 aa).

A DNL-type zinc finger spans residues 71–166 (QPKPTYNVSF…KPPQFKIRPA (96 aa)). Positions 82, 85, 107, and 110 each coordinate Zn(2+).

This is an uncharacterized protein from Schizosaccharomyces pombe (strain 972 / ATCC 24843) (Fission yeast).